The primary structure comprises 320 residues: Calnexin-independence factor 1 (320 aa).

The segment at 16–36 is disordered; the sequence is SAETSVGEKQPKRKRSEVRAE.

It is found in the nucleus. Its subcellular location is the nucleolus. In terms of biological role, induces a stably inheritable state of calnexin independence called the Cin state when overexpressed. This is Calnexin-independence factor 1 (cif1) from Schizosaccharomyces pombe (strain 972 / ATCC 24843) (Fission yeast).